The primary structure comprises 125 residues: uncharacterized protein (125 aa).

This is an uncharacterized protein from Microplitis demolitor (Parasitoid wasp).